The sequence spans 235 residues: Proteasome subunit alpha type-2 (235 aa).

It belongs to the peptidase T1A family. As to quaternary structure, the 26S proteasome consists of a 20S proteasome core and two 19S regulatory subunits. The 20S proteasome core is composed of 28 subunits that are arranged in four stacked rings, resulting in a barrel-shaped structure. The two end rings are each formed by seven alpha subunits, and the two central rings are each formed by seven beta subunits. The catalytic chamber with the active sites is on the inside of the barrel.

Its subcellular location is the cytoplasm. It localises to the nucleus. The proteasome is a multicatalytic proteinase complex which is characterized by its ability to cleave peptides with Arg, Phe, Tyr, Leu, and Glu adjacent to the leaving group at neutral or slightly basic pH. The proteasome has an ATP-dependent proteolytic activity. The sequence is that of Proteasome subunit alpha type-2 (PAB1) from Oryza sativa subsp. indica (Rice).